The chain runs to 312 residues: Elongation factor Ts (312 aa).

Positions 80–83 (TDFV) are involved in Mg(2+) ion dislocation from EF-Tu.

The protein belongs to the EF-Ts family.

It localises to the cytoplasm. Functionally, associates with the EF-Tu.GDP complex and induces the exchange of GDP to GTP. It remains bound to the aminoacyl-tRNA.EF-Tu.GTP complex up to the GTP hydrolysis stage on the ribosome. The protein is Elongation factor Ts of Maricaulis maris (strain MCS10) (Caulobacter maris).